We begin with the raw amino-acid sequence, 198 residues long: Phosphoheptose isomerase (198 aa).

An SIS domain is found at 36–195 (AIEVYQNGNK…EEAIFRNKFV (160 aa)). 51–53 (NGG) lines the substrate pocket. Zn(2+)-binding residues include His-60 and Glu-64. Residues Glu-64, 93 to 94 (ND), 119 to 121 (STS), Ser-124, and Gln-171 each bind substrate. Positions 171 and 179 each coordinate Zn(2+).

Belongs to the SIS family. GmhA subfamily. The cofactor is Zn(2+).

It is found in the cytoplasm. It catalyses the reaction 2 D-sedoheptulose 7-phosphate = D-glycero-alpha-D-manno-heptose 7-phosphate + D-glycero-beta-D-manno-heptose 7-phosphate. The protein operates within carbohydrate biosynthesis; D-glycero-D-manno-heptose 7-phosphate biosynthesis; D-glycero-alpha-D-manno-heptose 7-phosphate and D-glycero-beta-D-manno-heptose 7-phosphate from sedoheptulose 7-phosphate: step 1/1. It functions in the pathway cell surface structure biogenesis; S-layer biogenesis. In terms of biological role, catalyzes the isomerization of sedoheptulose 7-phosphate in D-glycero-D-manno-heptose 7-phosphate. The sequence is that of Phosphoheptose isomerase from Aneurinibacillus thermoaerophilus.